Here is a 252-residue protein sequence, read N- to C-terminus: Phosphomannomutase (252 aa).

The active-site Nucleophile is aspartate 13. Mg(2+) is bound by residues aspartate 13 and aspartate 15. Catalysis depends on aspartate 15, which acts as the Proton donor/acceptor. The alpha-D-mannose 1-phosphate site is built by arginine 22, arginine 124, arginine 135, arginine 142, serine 180, and aspartate 182. Aspartate 208, tyrosine 220, and threonine 225 together coordinate Mg(2+).

It belongs to the eukaryotic PMM family. As to quaternary structure, homodimer. It depends on Mg(2+) as a cofactor. Expressed in roots, stems, leaves, flowers and immature fruits.

It localises to the cytoplasm. It catalyses the reaction alpha-D-mannose 1-phosphate = D-mannose 6-phosphate. The protein operates within nucleotide-sugar biosynthesis; GDP-alpha-D-mannose biosynthesis; alpha-D-mannose 1-phosphate from D-fructose 6-phosphate: step 2/2. Catalyzes the interconversion of mannose-6-phosphate to mannose-1-phosphate, the precursor for the synthesis of GDP-mannose. GDP-mannose is an essential sugar nucleotide for the synthesis of D-mannose-containing cell wall polysaccharides (galactomannans and glucomannans), glycolipids, glycoproteins and the antioxidant L-ascorbate. Can complement the yeast temperature-sensitive mutant sec53-6. The chain is Phosphomannomutase from Nicotiana benthamiana.